Consider the following 484-residue polypeptide: Probable peptide/nitrate transporter At3g43790 (484 aa).

The next 12 membrane-spanning stretches (helical) occupy residues 39–59 (FIWL…PYIY), 76–96 (FYAG…SIFW), 107–127 (PIIL…GLST), 129–149 (FWLA…LGVI), 168–188 (VVST…GYLA), 210–230 (FLPS…CWWL), 278–298 (MAII…NEIF), 318–338 (VGEV…LVYP), 355–375 (VLLI…GVTL), 381–401 (CASI…FIML), 416–436 (ISMT…GVLF), and 460–480 (VFLV…IPYI).

The protein belongs to the major facilitator superfamily.

It localises to the membrane. The sequence is that of Probable peptide/nitrate transporter At3g43790 (ZIFL2) from Arabidopsis thaliana (Mouse-ear cress).